The sequence spans 241 residues: Probable FKBP-type peptidyl-prolyl cis-trans isomerase (241 aa).

Positions 150 to 241 (TDTVKVHYTG…VLDVNPKSEK (92 aa)) constitute a PPIase FKBP-type domain.

It belongs to the FKBP-type PPIase family.

It catalyses the reaction [protein]-peptidylproline (omega=180) = [protein]-peptidylproline (omega=0). Its function is as follows. PPIases accelerate the folding of proteins. It catalyzes the cis-trans isomerization of proline imidic peptide bonds in oligopeptides. The protein is Probable FKBP-type peptidyl-prolyl cis-trans isomerase of Haemophilus influenzae (strain ATCC 51907 / DSM 11121 / KW20 / Rd).